Here is a 194-residue protein sequence, read N- to C-terminus: Myelin-associated neurite-outgrowth inhibitor (194 aa).

An N-acetylmethionine modification is found at Met-1. Residues 1–18 (MNPVYSPGSSGVPYANAK) are Cytoplasmic-facing. Ser-6 bears the Phosphoserine mark. Residues 19–41 (GIGYPAGFPVGYAAAPAYSPNMY) form a helical membrane-spanning segment. Residues 42 to 141 (PGANPTFQTG…PAPIPPPRGS (100 aa)) are Extracellular-facing. N-linked (GlcNAc...) asparagine glycosylation occurs at Asn-45. The chain crosses the membrane as a helical span at residues 142–163 (GVTMGMVAGTTMAMSAGTLLTA). At 164-194 (HSPTPVAPHPVTVPTYRAPGTPTYSYVPPQW) the chain is on the cytoplasmic side.

Belongs to the FAM168 family. May form homodimers. May interact with DAZAP2, FAM168A, PRDX6, RBM6, TMTC1 and YPEL2. Interacts with CDC27. Post-translationally, N-glycosylated. Predominantly expressed in the brain, including olfactory bulb, cortex and cerebellum (at protein level).

It is found in the cytoplasm. The protein resides in the perinuclear region. Its subcellular location is the cell membrane. The protein localises to the cell projection. It localises to the axon. In terms of biological role, inhibitor of neuronal axonal outgrowth. Acts as a negative regulator of CDC42 and STAT3 and a positive regulator of STMN2. Positive regulator of CDC27. The chain is Myelin-associated neurite-outgrowth inhibitor (Fam168b) from Mus musculus (Mouse).